Reading from the N-terminus, the 54-residue chain is MLHYAVVFFIIALIAAVFGFGGIAASAAGIAKILFFVFVVLAVASFLFGLIRKG.

2 helical membrane passes run 5–25 (AVVF…GIAA) and 30–50 (IAKI…LFGL).

The protein belongs to the UPF0391 family.

It is found in the cell membrane. The sequence is that of UPF0391 membrane protein Mpe_A2904 from Methylibium petroleiphilum (strain ATCC BAA-1232 / LMG 22953 / PM1).